A 241-amino-acid polypeptide reads, in one-letter code: MDVARAKRVLLKLSGEALMGEQAYGIAPEFLSYLVEEVQSAIALDIELALVIGGGNIFRGISGSANGMGRTRADQMGMLATVINGLALQSALMLSGTEAVVQTALEMPRVAEPFDHDSAKSHMKQGRVVIFVAGTGNPFFTTDTAAALRACEIEADLLLKATKVDGVYDSDPVKNPKAKRFETLTYHEVLTKNLKVMDMTAITLCRENHIPIGVFSIFERGALTAVLRGEPKATIIEERKE.

12 to 15 contributes to the ATP binding site; the sequence is KLSG. Gly-54 lines the UMP pocket. ATP is bound by residues Gly-55 and Arg-59. UMP is bound by residues Asp-74 and 135 to 142; that span reads TGNPFFTT. ATP is bound by residues Thr-162, Tyr-168, and Asp-171.

This sequence belongs to the UMP kinase family. In terms of assembly, homohexamer.

The protein resides in the cytoplasm. It catalyses the reaction UMP + ATP = UDP + ADP. The protein operates within pyrimidine metabolism; CTP biosynthesis via de novo pathway; UDP from UMP (UMPK route): step 1/1. Inhibited by UTP. Functionally, catalyzes the reversible phosphorylation of UMP to UDP. The polypeptide is Uridylate kinase (Magnetococcus marinus (strain ATCC BAA-1437 / JCM 17883 / MC-1)).